Reading from the N-terminus, the 474-residue chain is ATP synthase subunit beta 1 (474 aa).

157-164 (GGAGVGKT) lines the ATP pocket.

Belongs to the ATPase alpha/beta chains family. In terms of assembly, F-type ATPases have 2 components, CF(1) - the catalytic core - and CF(0) - the membrane proton channel. CF(1) has five subunits: alpha(3), beta(3), gamma(1), delta(1), epsilon(1). CF(0) has three main subunits: a(1), b(2) and c(9-12). The alpha and beta chains form an alternating ring which encloses part of the gamma chain. CF(1) is attached to CF(0) by a central stalk formed by the gamma and epsilon chains, while a peripheral stalk is formed by the delta and b chains.

The protein resides in the cell inner membrane. It carries out the reaction ATP + H2O + 4 H(+)(in) = ADP + phosphate + 5 H(+)(out). Functionally, produces ATP from ADP in the presence of a proton gradient across the membrane. The catalytic sites are hosted primarily by the beta subunits. In Polaromonas naphthalenivorans (strain CJ2), this protein is ATP synthase subunit beta 1.